The sequence spans 185 residues: MTAFYKLCGMSMLSLVLADCTFLSANKPYDRDHDGELIVHMKDVNTHKEVGTITISPYIHDGNQEGMLITPHLYNLPANTTHGMHIHINPSCEDNGIAAGGHWDPDNTQKHLGPYNDNGHKGDLPVLVVNADGTATEPVVAPKLNSLEELAGHSLMLHAGGDNYSDKPQPLGGGGARMWCGVIAD.

Residues 1–18 (MTAFYKLCGMSMLSLVLA) form the signal peptide. Residues H85, H87, and H102 each contribute to the Cu cation site. A disulfide bond links C92 and C180. Zn(2+)-binding residues include H102, H111, H120, and D123. Residue H158 participates in Cu cation binding.

The protein belongs to the Cu-Zn superoxide dismutase family. Homodimer. Cu cation serves as cofactor. The cofactor is Zn(2+).

The protein resides in the periplasm. It catalyses the reaction 2 superoxide + 2 H(+) = H2O2 + O2. Its function is as follows. Destroys radicals which are normally produced within the cells and which are toxic to biological systems. This is Superoxide dismutase [Cu-Zn] (sodC) from Francisella tularensis subsp. holarctica (strain LVS).